We begin with the raw amino-acid sequence, 1180 residues long: Tudor domain-containing protein 1 (1180 aa).

Disordered stretches follow at residues 1–66 (MSVK…KKNN) and 79–138 (SQED…RPAK). The segment covering 27–41 (NFEKNENKLPPHESL) has biased composition (basic and acidic residues). Composition is skewed to polar residues over residues 79-91 (SQEDNSVSSNPNG) and 110-122 (NSVSPPSAESNSP). Residues C170, C173, C181, C184, C190, C194, H202, and C206 each coordinate Zn(2+). The MYND-type zinc finger occupies 170-206 (CHRCGLFGSLRCSQCKQTYYCSTACQRRDWSAHSIVC). Residues 312–372 (IPVKGEVCIA…YHLNRNIDLF (61 aa)) enclose the Tudor 1 domain. Residues 450–469 (SGQDSKKENADQSDPEDVGK) form a disordered region. 3 consecutive Tudor domains span residues 541 to 600 (YPAI…LLEL), 762 to 821 (KAEI…FLNL), and 990 to 1048 (RPRI…HLAL).

This sequence belongs to the TDRD1 family. In terms of assembly, found in a mRNP complex, at least composed of TDRD1, TDRD6, TDRD7 and DDX4. Interacts with MAEL. Interacts with PIWIL1, PIWIL2 and PIWIL4 (when methylated on arginine residues). Interacts with TDRD12. Testis and ovary specific. Also expressed in several cancers.

The protein localises to the cytoplasm. Its function is as follows. Plays a central role during spermatogenesis by participating in the repression transposable elements and preventing their mobilization, which is essential for the germline integrity. Acts via the piRNA metabolic process, which mediates the repression of transposable elements during meiosis by forming complexes composed of piRNAs and Piwi proteins and governs the methylation and subsequent repression of transposons. Required for the localization of Piwi proteins to the meiotic nuage. Involved in the piRNA metabolic process by ensuring the entry of correct transcripts into the normal piRNA pool and limiting the entry of cellular transcripts into the piRNA pathway. May act by allowing the recruitment of piRNA biogenesis or loading factors that ensure the correct entry of transcripts and piRNAs into Piwi proteins. The polypeptide is Tudor domain-containing protein 1 (TDRD1) (Homo sapiens (Human)).